A 106-amino-acid polypeptide reads, in one-letter code: UPF0145 protein Tlet_1264 (106 aa).

The protein belongs to the UPF0145 family.

This is UPF0145 protein Tlet_1264 from Pseudothermotoga lettingae (strain ATCC BAA-301 / DSM 14385 / NBRC 107922 / TMO) (Thermotoga lettingae).